We begin with the raw amino-acid sequence, 185 residues long: Protein LPA2 (185 aa).

A chloroplast-targeting transit peptide spans 1–46; it reads MALQIHSPCSFSTRPYHLFFTTRNPRFAIKCQNSQIESDTTEDPSR. A disordered region spans residues 35–105; it reads QIESDTTEDP…VFMSEEGAAK (71 aa). A compositionally biased stretch (low complexity) spans 47–75; it reads SKNSSSSGVGFGSPASSSSPAKKLSAATS. A compositionally biased stretch (basic and acidic residues) spans 83-92; sequence KREVNRRAPV. A run of 2 helical transmembrane segments spans residues 115-135 and 152-172; these read AFLL…IILA and VYPV…AYGV.

It localises to the plastid. The protein resides in the chloroplast membrane. The protein is Protein LPA2 of Arabidopsis thaliana (Mouse-ear cress).